We begin with the raw amino-acid sequence, 465 residues long: Hepatocyte nuclear factor 6 (465 aa).

4 disordered regions span residues 17–55 (SHEP…SMGM), 120–141 (DKFP…HQRL), 264–290 (LLGT…GQME), and 442–465 (DKWQ…CTKA). Residues 123 to 140 (PHHHHHHHHHHHPHHHQR) show a composition bias toward basic residues. A compositionally biased stretch (polar residues) spans 273 to 288 (PSVTGAQVSNGSNSGQ). The CUT DNA-binding region spans 283 to 369 (GSNSGQMEEI…QRMSALRLAA (87 aa)). The homeobox DNA-binding region spans 385-444 (PKKPRLVFTDVQRRTLHAIFKENKRPSKELQITISQQLGLELSTVSNFFMNARRRSLDKW). A compositionally biased stretch (low complexity) spans 448 to 465 (GSSNSGNSSSSSSTCTKA).

This sequence belongs to the CUT homeobox family. Binds DNA as a monomer. As to expression, highly expressed in liver; lower expression in testis and skin.

The protein localises to the nucleus. Functionally, transcriptional activator. Binds the consensus sequence 5'-DHWATTGAYTWWD-3' on a variety of gene promoters such as those of HNF3B and TTR. Important for liver genes transcription. This chain is Hepatocyte nuclear factor 6 (ONECUT1), found in Homo sapiens (Human).